We begin with the raw amino-acid sequence, 444 residues long: MYISKSFIPILKNNPSEAKIKSHQLMLRVGMIKQSSAGIYSWLPLGFKVMKKIEQIVREEQNKIGAQEILMPTIQPSDIWKESGRYDDYGDEMLRIKDRQGREMLYGPTNEELVTDIFRSSVKSYKSLPQLLYHIQWKFRDEVRPRFGIMRGREFYMKDAYSFDVNDEDATFSYNKFFFSYLKTFKRLELSAIPMAADTGPIGGNLSHEFIILADTGESKIFTDKRVFDLGSEGTVLDRQSLQDLRKKYEQYYAVADEKFNKNEFEEKVSEENRLITKGIEVGHIFYFGDKYSKALNAAVDLPGGKKDFVKMGSYGIGVSRLVGAIIEAKYDQKDEIMKWPFSVAPYELAIIPMINKNDTSALDKANKLFKHFESKNIDTIIDDMDENLSSKIKKFNLIGVPYQIILGKNSEDNLLEFKEIGKDPKSLTLDQITQILTEQKLKN.

The protein belongs to the class-II aminoacyl-tRNA synthetase family. ProS type 2 subfamily. Homodimer.

The protein resides in the cytoplasm. The enzyme catalyses tRNA(Pro) + L-proline + ATP = L-prolyl-tRNA(Pro) + AMP + diphosphate. Functionally, catalyzes the attachment of proline to tRNA(Pro) in a two-step reaction: proline is first activated by ATP to form Pro-AMP and then transferred to the acceptor end of tRNA(Pro). This is Proline--tRNA ligase from Pelagibacter ubique (strain HTCC1062).